Reading from the N-terminus, the 293-residue chain is Acetylglutamate kinase (293 aa).

Residues 70-71 (GG), Arg-92, and Asn-186 contribute to the substrate site.

It belongs to the acetylglutamate kinase family. ArgB subfamily.

It is found in the cytoplasm. The enzyme catalyses N-acetyl-L-glutamate + ATP = N-acetyl-L-glutamyl 5-phosphate + ADP. Its pathway is amino-acid biosynthesis; L-arginine biosynthesis; N(2)-acetyl-L-ornithine from L-glutamate: step 2/4. Its function is as follows. Catalyzes the ATP-dependent phosphorylation of N-acetyl-L-glutamate. In Synechococcus sp. (strain CC9605), this protein is Acetylglutamate kinase.